The primary structure comprises 686 residues: Elongation factor G 2 (686 aa).

The tr-type G domain maps to threonine 7–leucine 280. GTP contacts are provided by residues alanine 16–threonine 23, aspartate 80–histidine 84, and asparagine 134–aspartate 137.

It belongs to the TRAFAC class translation factor GTPase superfamily. Classic translation factor GTPase family. EF-G/EF-2 subfamily.

The protein localises to the cytoplasm. In terms of biological role, catalyzes the GTP-dependent ribosomal translocation step during translation elongation. During this step, the ribosome changes from the pre-translocational (PRE) to the post-translocational (POST) state as the newly formed A-site-bound peptidyl-tRNA and P-site-bound deacylated tRNA move to the P and E sites, respectively. Catalyzes the coordinated movement of the two tRNA molecules, the mRNA and conformational changes in the ribosome. This is Elongation factor G 2 (fusB) from Streptomyces coelicolor (strain ATCC BAA-471 / A3(2) / M145).